The chain runs to 260 residues: 3'-5' ssDNA/RNA exonuclease TatD (260 aa).

Residues glutamate 92, histidine 128, and histidine 153 each contribute to the a divalent metal cation site.

It belongs to the metallo-dependent hydrolases superfamily. TatD-type hydrolase family. TatD subfamily. Monomer. Requires Mg(2+) as cofactor.

Its subcellular location is the cytoplasm. Its function is as follows. 3'-5' exonuclease that prefers single-stranded DNA and RNA. May play a role in the H(2)O(2)-induced DNA damage repair. The chain is 3'-5' ssDNA/RNA exonuclease TatD from Pectobacterium parmentieri (strain WPP163) (Pectobacterium wasabiae (strain WPP163)).